The chain runs to 113 residues: MAGKGFGFSLGKMKELADAFKKAQQVQEGAKQVQEDLNNMEIEGQAQGGLVKVWVSGNQEPLRAEIAPEALNEGAEVLSELVAAAMKDAYQKSTAAMKEKMEALTAGLGIPGL.

The protein belongs to the YbaB/EbfC family. Homodimer.

It localises to the cytoplasm. The protein resides in the nucleoid. Its function is as follows. Binds to DNA and alters its conformation. May be involved in regulation of gene expression, nucleoid organization and DNA protection. The chain is Nucleoid-associated protein Synpcc7942_0464 from Synechococcus elongatus (strain ATCC 33912 / PCC 7942 / FACHB-805) (Anacystis nidulans R2).